We begin with the raw amino-acid sequence, 340 residues long: MASTTPSTYKQAVFKEQGAGLTLEEVALTLPKRDEILVKVEACGVCHSDHFAQTNLMGGGFPLVPGHEIIGRVAAVGEGETVWKEGDRIGGAWHGGHDGTCGACKKGFFQMCDNEQVNGISRNGGYAEYCIIRREAAVHIPDHVNAAKYAPMLCAGVTVFNAMRHMKIPPGELVAIQGLGGLGHLALQYANKFGYRVVALSRDSTKEEFARKLGAHEYIDTSREDPVAALQKLGGASLIVSTAPVPEIINPLIQGLGVMGKLLILSIVGGIEVHTGLLVGKGKSIWSWPSGHATDSEDAIAFADLHGIDCLIEEFPLDKCNEAFAAMMEGSVRFRAVITM.

Cys46 lines the Zn(2+) pocket. His47 provides a ligand contact to NAD(+). Residues His67, Glu68, Cys101, Cys104, Cys112, and Cys154 each contribute to the Zn(2+) site. A substrate-binding site is contributed by His67. NAD(+) contacts are provided by residues 178–183 (GLGGLG), 198–203 (VALSRD), Lys206, 265–267 (LSI), 289–291 (PSG), and 297–299 (EDA).

The protein belongs to the zinc-containing alcohol dehydrogenase family. Requires Zn(2+) as cofactor.

The protein resides in the cytoplasm. The protein localises to the cytosol. It catalyses the reaction neopatulin + NADPH + H(+) = (E)-ascladiol + NADP(+). It functions in the pathway mycotoxin biosynthesis; patulin biosynthesis. Its function is as follows. Alcohol dehydrogenase; part of the gene cluster that mediates the biosynthesis of patulin, an acetate-derived tetraketide mycotoxin produced by several fungal species that shows antimicrobial properties against several bacteria. PatD catalyzes the conversion of neopatulin into E-ascladiol. The pathway begins with the synthesis of 6-methylsalicylic acid by the polyketide synthase (PKS) patK via condensation of acetate and malonate units. The 6-methylsalicylic acid decarboxylase patG then catalyzes the decarboxylation of 6-methylsalicylic acid to yield m-cresol (also known as 3-methylphenol). These first reactions occur in the cytosol. The intermediate m-cresol is then transported into the endoplasmic reticulum where the cytochrome P450 monooxygenase patH converts it to m-hydroxybenzyl alcohol, which is further converted to gentisyl alcohol by the cytochrome P450 monooxygenase patI. The oxidoreductases patJ and patO further convert gentisyl alcohol to isoepoxydon in the vacuole. PatN catalyzes then the transformation of isoepoxydon into phyllostine. The cluster protein patF is responsible for the conversion from phyllostine to neopatulin whereas the alcohol dehydrogenase patD converts neopatulin to E-ascladiol. The steps between isoepoxydon and E-ascladiol occur in the cytosol, and E-ascladiol is probably secreted to the extracellular space by one of the cluster-specific transporters patC or patM. Finally, the secreted patulin synthase patE catalyzes the conversion of E-ascladiol to patulin. This chain is Alcohol dehydrogenase patD, found in Penicillium expansum (Blue mold rot fungus).